A 252-amino-acid chain; its full sequence is Probable transcriptional regulatory protein Npun_R5651 (252 aa).

Belongs to the TACO1 family.

Its subcellular location is the cytoplasm. This is Probable transcriptional regulatory protein Npun_R5651 from Nostoc punctiforme (strain ATCC 29133 / PCC 73102).